The following is a 165-amino-acid chain: CDP-archaeol synthase (165 aa).

Helical transmembrane passes span 4-24, 78-98, and 118-138; these read IVQL…AVLA, LLDA…GAFV, and FLLM…PLLL.

This sequence belongs to the CDP-archaeol synthase family. Mg(2+) is required as a cofactor.

The protein localises to the cell membrane. The enzyme catalyses 2,3-bis-O-(geranylgeranyl)-sn-glycerol 1-phosphate + CTP + H(+) = CDP-2,3-bis-O-(geranylgeranyl)-sn-glycerol + diphosphate. The protein operates within membrane lipid metabolism; glycerophospholipid metabolism. In terms of biological role, catalyzes the formation of CDP-2,3-bis-(O-geranylgeranyl)-sn-glycerol (CDP-archaeol) from 2,3-bis-(O-geranylgeranyl)-sn-glycerol 1-phosphate (DGGGP) and CTP. This reaction is the third ether-bond-formation step in the biosynthesis of archaeal membrane lipids. In Pyrobaculum calidifontis (strain DSM 21063 / JCM 11548 / VA1), this protein is CDP-archaeol synthase.